Consider the following 129-residue polypeptide: Ribosome-binding factor A (129 aa).

This sequence belongs to the RbfA family. As to quaternary structure, monomer. Binds 30S ribosomal subunits, but not 50S ribosomal subunits or 70S ribosomes.

It localises to the cytoplasm. Its function is as follows. One of several proteins that assist in the late maturation steps of the functional core of the 30S ribosomal subunit. Associates with free 30S ribosomal subunits (but not with 30S subunits that are part of 70S ribosomes or polysomes). Required for efficient processing of 16S rRNA. May interact with the 5'-terminal helix region of 16S rRNA. This is Ribosome-binding factor A from Ectopseudomonas mendocina (strain ymp) (Pseudomonas mendocina).